Consider the following 158-residue polypeptide: NADPH-dependent 7-cyano-7-deazaguanine reductase (158 aa).

Cysteine 56 (thioimide intermediate) is an active-site residue. The active-site Proton donor is aspartate 63. Residues 78–80 and 97–98 each bind substrate; these read LES and HE.

Belongs to the GTP cyclohydrolase I family. QueF type 1 subfamily.

Its subcellular location is the cytoplasm. The enzyme catalyses 7-aminomethyl-7-carbaguanine + 2 NADP(+) = 7-cyano-7-deazaguanine + 2 NADPH + 3 H(+). It participates in tRNA modification; tRNA-queuosine biosynthesis. Its function is as follows. Catalyzes the NADPH-dependent reduction of 7-cyano-7-deazaguanine (preQ0) to 7-aminomethyl-7-deazaguanine (preQ1). This is NADPH-dependent 7-cyano-7-deazaguanine reductase from Nitrobacter winogradskyi (strain ATCC 25391 / DSM 10237 / CIP 104748 / NCIMB 11846 / Nb-255).